A 444-amino-acid polypeptide reads, in one-letter code: MSGSYDEASLAPEETTDSFWEVGNYKRTVKRIDDGHRLCNDLMSCVQERAKIEKAYAQQLTDWAKRWRQLLEKGPQYGSLERAWGAIMTEADKVSELHQEMKNSLLNEDLEKVKNWQKDAYHKQIMGGFKETKEAEDGFRKAQKPWAKKMKELEAAKKAYHLACKEEKLAVTREMNSKTEQSVTPEQQKKLQDKVDKCKQDVQKTQEKYEKVLDDVGKTTPQYMEGMEQVFEQCQQFEEKRLVFLKEVLLDIKRHLNLAESSSYVQVYRELEQAIRGADAQDDLRWFRSTSGPGMPMNWPQFEEWNPDLPHTAAKKEKQPKKAEGAALTNAAGVVESTSQAGDRGSVSSYDRGQTYATEWSDDESGNPFGGSEANGGSNPFDEDAKGVRVRALYDYDGQEQDELSFKAGDELTKLGEEDEQGWCRGRLDSGQLGLYPANYVEVV.

2 positions are modified to phosphoserine: S2 and S79. Residues 13–283 (EETTDSFWEV…AIRGADAQDD (271 aa)) enclose the F-BAR domain. The stretch at 26 to 275 (KRTVKRIDDG…QVYRELEQAI (250 aa)) forms a coiled coil. The residue at position 184 (T184) is a Phosphothreonine. The interval 313–384 (AAKKEKQPKK…NGGSNPFDED (72 aa)) is disordered. The segment covering 314-324 (AKKEKQPKKAE) has biased composition (basic and acidic residues). Residues 336–358 (ESTSQAGDRGSVSSYDRGQTYAT) show a composition bias toward polar residues. 5 positions are modified to phosphoserine: S346, S348, S349, S361, and S365. One can recognise an SH3 domain in the interval 385-444 (AKGVRVRALYDYDGQEQDELSFKAGDELTKLGEEDEQGWCRGRLDSGQLGLYPANYVEVV). Position 394 is a phosphotyrosine (Y394). S405 and S430 each carry phosphoserine.

This sequence belongs to the PACSIN family. As to quaternary structure, homodimer. May form heterooligomers with other PACSINs. Interacts with MAPT. Interacts (via SH3 domain) with SYNJ1 and WASL. Interacts (via SH3 domain) with DNM1; the interaction is reduced by DNM1 phosphorylation. Interacts with DNM2 and DNM3. Interacts with both COBL and DBNL. Identified in a complex composed of COBL, PACSIN1 and WASL. Interacts with EHD1 and EHD3. Interacts with TRPV4. Post-translationally, phosphorylated by casein kinase 2 (CK2) and protein kinase C (PKC).

It is found in the cytoplasm. The protein localises to the cell projection. It localises to the synapse. The protein resides in the synaptosome. Its subcellular location is the ruffle membrane. It is found in the membrane. The protein localises to the cytoplasmic vesicle membrane. It localises to the cytosol. The protein resides in the cell membrane. Its function is as follows. Binds to membranes via its F-BAR domain and mediates membrane tubulation. Plays a role in the reorganization of the microtubule cytoskeleton via its interaction with MAPT; this decreases microtubule stability and inhibits MAPT-induced microtubule polymerization. Plays a role in cellular transport processes by recruiting DNM1, DNM2 and DNM3 to membranes. Plays a role in the reorganization of the actin cytoskeleton and in neuron morphogenesis via its interaction with COBL and WASL, and by recruiting COBL to the cell cortex. Plays a role in the regulation of neurite formation, neurite branching and the regulation of neurite length. Required for normal synaptic vesicle endocytosis; this process retrieves previously released neurotransmitters to accommodate multiple cycles of neurotransmission. Required for normal excitatory and inhibitory synaptic transmission. In Bos taurus (Bovine), this protein is Protein kinase C and casein kinase substrate in neurons protein 1 (PACSIN1).